An 870-amino-acid chain; its full sequence is Leucine--tRNA ligase (870 aa).

The 'HIGH' region motif lies at 36 to 46 (PYPSGKIHLGH). A 'KMSKS' region motif is present at residues 602 to 606 (KMSKS). Residue K605 participates in ATP binding.

The protein belongs to the class-I aminoacyl-tRNA synthetase family.

The protein localises to the cytoplasm. The enzyme catalyses tRNA(Leu) + L-leucine + ATP = L-leucyl-tRNA(Leu) + AMP + diphosphate. This chain is Leucine--tRNA ligase, found in Rickettsia akari (strain Hartford).